Reading from the N-terminus, the 145-residue chain is 3-hydroxyacyl-[acyl-carrier-protein] dehydratase FabZ (145 aa).

The active site involves histidine 48.

The protein belongs to the thioester dehydratase family. FabZ subfamily.

The protein localises to the cytoplasm. It catalyses the reaction a (3R)-hydroxyacyl-[ACP] = a (2E)-enoyl-[ACP] + H2O. Functionally, involved in unsaturated fatty acids biosynthesis. Catalyzes the dehydration of short chain beta-hydroxyacyl-ACPs and long chain saturated and unsaturated beta-hydroxyacyl-ACPs. In Stutzerimonas stutzeri (strain A1501) (Pseudomonas stutzeri), this protein is 3-hydroxyacyl-[acyl-carrier-protein] dehydratase FabZ.